The primary structure comprises 141 residues: Hemoglobin subunit alpha-2 (141 aa).

Residues 1–141 enclose the Globin domain; it reads VLTDAERKEV…VATVLTSKYR (141 aa). Histidine 58 provides a ligand contact to O2. Histidine 87 contacts heme b.

Belongs to the globin family. Heterotetramer of two alpha chains and two beta chains. In terms of tissue distribution, red blood cells.

In terms of biological role, involved in oxygen transport from the lung to the various peripheral tissues. The sequence is that of Hemoglobin subunit alpha-2 from Tachyglossus aculeatus aculeatus (Southeast Australian short-beaked echidna).